A 303-amino-acid polypeptide reads, in one-letter code: Probable 5-dehydro-4-deoxyglucarate dehydratase (303 aa).

It belongs to the DapA family.

The enzyme catalyses 5-dehydro-4-deoxy-D-glucarate + H(+) = 2,5-dioxopentanoate + CO2 + H2O. The protein operates within carbohydrate acid metabolism; D-glucarate degradation; 2,5-dioxopentanoate from D-glucarate: step 2/2. The sequence is that of Probable 5-dehydro-4-deoxyglucarate dehydratase from Pseudomonas fluorescens (strain Pf0-1).